The sequence spans 790 residues: Centrosomal protein of 78 kDa (790 aa).

5 disordered regions span residues 325–345 (YQWVTSPSSKEPSKTAKQRKK), 362–385 (GLATKKPSSNGRKQGLGKDCYAPN), 428–462 (VTVTVESPSSSETDETEDSSESVQEAPQKTSIKEE), 654–732 (AKTG…LNEP), and 756–790 (KTIKSKPNLLEHSESDTLGSDFELQERVHSSAHLT). Phosphoserine is present on residues Ser330 and Ser332. The segment covering 428–438 (VTVTVESPSSS) has biased composition (low complexity). Residues 455–510 (QKTSIKEETLQEKLEECLRQLKEERVIRLKADKRVSELEHENAQLRNINFSLSEAL) are a coiled coil. Composition is skewed to basic and acidic residues over residues 693 to 708 (PSRRPSAERHPRKDLL) and 721 to 732 (GPGDRRSLLNEP).

The protein belongs to the CEP78 family. Interacts with PLK4. Interacts with FAM161A. Interacts with IFT20; regulating IFT20 stability and localization. Interacts with TTC21A; regulating TTC21A stability and localization. Interacts with USP16; promoting USP16-dependent deubiquitination of tektins. Interacts with DCAF1/VPRBP; promoting localization of the EDVP complex to centrosomes. Interacts with CEP350; promoting CEP78 localization to centrosome and centriole. In terms of tissue distribution, expressed by photoreceptor cells in the retina.

Its subcellular location is the cytoplasm. The protein localises to the cytoskeleton. It localises to the microtubule organizing center. It is found in the centrosome. The protein resides in the centriole. Its subcellular location is the cilium basal body. Functionally, centriole wall protein that localizes to mature centrioles and regulates centriole and cilia biogenesis. Involved in centrosome duplication: required for efficient PLK4 centrosomal localization and PLK4-induced overduplication of centrioles. Involved in cilium biogenesis and controls cilium length. Acts as a regulator of protein stability by preventing ubiquitination of centrosomal proteins, such as CCP110 and tektins. Associates with the EDVP complex, preventing ubiquitination and degradation of CCP110. Promotes deubiquitination of tektin proteins (TEKT1, TEKT2, TEK3, TEKT4 and TEKT5) via its interaction with USP16. The sequence is that of Centrosomal protein of 78 kDa from Mus musculus (Mouse).